We begin with the raw amino-acid sequence, 278 residues long: FALAHMVNDFDIMKSYLDEGANGIETDITFSPEGEPESAFHGVPCDCKRWCDRTVSFDSYLQKTSDLSTPGHPDYRENLLIIILDLKLNGLSQDALANGGRRLADKLAAHFWTVGRRDQRATFVVSVPQTSQKVFMKTFREGMEAIGMGDMNAKVGFDFTDNGDVSVTKAVYDELGITEHIWASDGITNCVALLFRGTSRLEELIQKRDEGESTYISKVYAWTYDKETSVVLALELGVDGVMTNYADFVISILNKPEHSSKYRLATYEDDPFERFKAV.

His-5 is an active-site residue. The Mg(2+) site is built by Glu-25 and Asp-27. The active-site Nucleophile is His-41. Disulfide bonds link Cys-45-Cys-51 and Cys-47-Cys-190. A Mg(2+)-binding site is contributed by Asp-85.

Belongs to the arthropod phospholipase D family. Class II subfamily. The cofactor is Mg(2+). In terms of tissue distribution, expressed by the venom gland.

It localises to the secreted. The catalysed reaction is an N-(acyl)-sphingosylphosphocholine = an N-(acyl)-sphingosyl-1,3-cyclic phosphate + choline. It catalyses the reaction an N-(acyl)-sphingosylphosphoethanolamine = an N-(acyl)-sphingosyl-1,3-cyclic phosphate + ethanolamine. The enzyme catalyses a 1-acyl-sn-glycero-3-phosphocholine = a 1-acyl-sn-glycero-2,3-cyclic phosphate + choline. It carries out the reaction a 1-acyl-sn-glycero-3-phosphoethanolamine = a 1-acyl-sn-glycero-2,3-cyclic phosphate + ethanolamine. Dermonecrotic toxins cleave the phosphodiester linkage between the phosphate and headgroup of certain phospholipids (sphingolipid and lysolipid substrates), forming an alcohol (often choline) and a cyclic phosphate. This toxin acts on sphingomyelin (SM). It may also act on ceramide phosphoethanolamine (CPE), lysophosphatidylcholine (LPC) and lysophosphatidylethanolamine (LPE), but not on lysophosphatidylserine (LPS), and lysophosphatidylglycerol (LPG). It acts by transphosphatidylation, releasing exclusively cyclic phosphate products as second products. Induces dermonecrosis, hemolysis, increased vascular permeability, edema, inflammatory response, and platelet aggregation. The protein is Dermonecrotic toxin LspiSicTox-betaIE2iii of Loxosceles spinulosa (Recluse spider).